Consider the following 99-residue polypeptide: Small ribosomal subunit protein bS20 (99 aa).

Residues 1–20 are compositionally biased toward basic residues; the sequence is MASAKPKKKNPRLASGRKRA. The tract at residues 1–29 is disordered; it reads MASAKPKKKNPRLASGRKRARQDVKLNAA.

It belongs to the bacterial ribosomal protein bS20 family.

Its function is as follows. Binds directly to 16S ribosomal RNA. The chain is Small ribosomal subunit protein bS20 from Paracidovorax citrulli (strain AAC00-1) (Acidovorax citrulli).